Here is a 406-residue protein sequence, read N- to C-terminus: 2,3-bisphosphoglycerate-independent phosphoglycerate mutase (406 aa).

The tract at residues Val-164 to Asp-184 is disordered.

The protein belongs to the BPG-independent phosphoglycerate mutase family. A-PGAM subfamily.

It carries out the reaction (2R)-2-phosphoglycerate = (2R)-3-phosphoglycerate. It participates in carbohydrate degradation; glycolysis; pyruvate from D-glyceraldehyde 3-phosphate: step 3/5. In terms of biological role, catalyzes the interconversion of 2-phosphoglycerate and 3-phosphoglycerate. This chain is 2,3-bisphosphoglycerate-independent phosphoglycerate mutase, found in Methanocorpusculum labreanum (strain ATCC 43576 / DSM 4855 / Z).